Reading from the N-terminus, the 268-residue chain is F-actin-capping protein subunit beta (268 aa).

Belongs to the F-actin-capping protein beta subunit family. Component of the F-actin capping complex, composed of a heterodimer of an alpha and a beta subunit.

It is found in the cytoplasm. Its subcellular location is the cytoskeleton. The protein resides in the actin patch. The protein localises to the nucleus. Its function is as follows. F-actin-capping proteins bind in a Ca(2+)-independent manner to the fast growing ends of actin filaments (barbed end) thereby blocking the exchange of subunits at these ends. Unlike other capping proteins (such as gelsolin and severin), these proteins do not sever actin filaments. Competes with formin cdc12 for attachment to the actin filaments barbed ends. Slowly replaces cdc12 on the barbed ends in preparation for filament disassembly during contractile ring constriction. This Schizosaccharomyces pombe (strain 972 / ATCC 24843) (Fission yeast) protein is F-actin-capping protein subunit beta (acp2).